The sequence spans 175 residues: Co-chaperone protein HscB homolog (175 aa).

Positions 7–79 (SHFDLFHLPA…LQRASYLLSL (73 aa)) constitute a J domain.

It belongs to the HscB family. In terms of assembly, interacts with HscA and stimulates its ATPase activity.

Functionally, co-chaperone involved in the maturation of iron-sulfur cluster-containing proteins. Seems to help targeting proteins to be folded toward HscA. The protein is Co-chaperone protein HscB homolog of Burkholderia vietnamiensis (strain G4 / LMG 22486) (Burkholderia cepacia (strain R1808)).